Here is a 285-residue protein sequence, read N- to C-terminus: Probable endonuclease 4 (285 aa).

Residues His69, His109, Glu145, Asp179, His182, His216, Asp229, His231, and Glu261 each contribute to the Zn(2+) site.

The protein belongs to the AP endonuclease 2 family. It depends on Zn(2+) as a cofactor.

It carries out the reaction Endonucleolytic cleavage to 5'-phosphooligonucleotide end-products.. Endonuclease IV plays a role in DNA repair. It cleaves phosphodiester bonds at apurinic or apyrimidinic (AP) sites, generating a 3'-hydroxyl group and a 5'-terminal sugar phosphate. This Salmonella arizonae (strain ATCC BAA-731 / CDC346-86 / RSK2980) protein is Probable endonuclease 4.